The primary structure comprises 299 residues: Oxygen-dependent coproporphyrinogen-III oxidase (299 aa).

Ser92 is a substrate binding site. The a divalent metal cation site is built by His96 and His106. Residue His106 is the Proton donor of the active site. 108–110 lines the substrate pocket; that stretch reads NVR. A divalent metal cation contacts are provided by His145 and His175. Residues 240 to 275 are important for dimerization; it reads YVEFNLVWDRGTLFGLQTGGRTESILMSMPPLVRWE. Position 258–260 (258–260) interacts with substrate; sequence GGR.

This sequence belongs to the aerobic coproporphyrinogen-III oxidase family. Homodimer. A divalent metal cation is required as a cofactor.

The protein localises to the cytoplasm. It carries out the reaction coproporphyrinogen III + O2 + 2 H(+) = protoporphyrinogen IX + 2 CO2 + 2 H2O. It functions in the pathway porphyrin-containing compound metabolism; protoporphyrin-IX biosynthesis; protoporphyrinogen-IX from coproporphyrinogen-III (O2 route): step 1/1. Its function is as follows. Involved in the heme biosynthesis. Catalyzes the aerobic oxidative decarboxylation of propionate groups of rings A and B of coproporphyrinogen-III to yield the vinyl groups in protoporphyrinogen-IX. The sequence is that of Oxygen-dependent coproporphyrinogen-III oxidase from Salmonella enteritidis PT4 (strain P125109).